A 702-amino-acid chain; its full sequence is MNSLFASTARGLEELLKTELEKLGAVGCQVVQGGVHFQGDTRLIYQSLMWSRLASRIILPMGECKVYSDLDLYLGVQAINWTEIFNLGATFAVHFSGLNDTIRNSQYGAMKVKDAIVDAFTRKNLPRPNVDRESPDLRINVWLNKETASIALDLSGDGLHLRGYRDRTGLAPIKETLAAAIVMRSGWQPGTPLLDPMCGSGTLLIEAAMWATDRAPGLHRGHWGFSGWAQHDETIWQEVKAEAQTRARKGLAEYSSHFYGSDSDARVIERARSNARRAGIGELITFEVKDVAQLSNPLPKGPYGTVISNPPYGERLDSEPALIALHSLLGRTMKNQFGGWNLSLFSASPDLLGSLQLRADKQFKAKNGPLDCVQKNYHIAETTADSKPATVAEDYANRLRKNLKKLEKWARQEGIECYRLYDADLPEYNVAVDRYGDWAVIQEYAPPKTVDAQKARQRLFDIIAATLSVLGIPPNKLVLKTRERQKGKNQYQKMSEKGEFLEVSEYNARLWVNLTDYLDTGLFLDHRIARRMLGEMSKGKDFLNLFSYTGSASVHAGLGGARSTTTVDMSRTYLEWAERNLRLNGLSGRAHRLIQADCLGWLREANEQFDLIFIDPPTFSNSKRMEESFDVQRDHVALMKDLKRLLRKGGTIMFSNNKRGFRMDLEGLAELGLTAQEITQKTLSPDFARNRQIHNCWLIRAA.

In terms of domain architecture, THUMP spans 43 to 154 (LIYQSLMWSR…KETASIALDL (112 aa)).

This sequence belongs to the methyltransferase superfamily. RlmKL family.

The protein resides in the cytoplasm. It catalyses the reaction guanosine(2445) in 23S rRNA + S-adenosyl-L-methionine = N(2)-methylguanosine(2445) in 23S rRNA + S-adenosyl-L-homocysteine + H(+). It carries out the reaction guanosine(2069) in 23S rRNA + S-adenosyl-L-methionine = N(2)-methylguanosine(2069) in 23S rRNA + S-adenosyl-L-homocysteine + H(+). Functionally, specifically methylates the guanine in position 2445 (m2G2445) and the guanine in position 2069 (m7G2069) of 23S rRNA. In Salmonella choleraesuis (strain SC-B67), this protein is Ribosomal RNA large subunit methyltransferase K/L.